Here is a 542-residue protein sequence, read N- to C-terminus: 2,3-bisphosphoglycerate-independent phosphoglycerate mutase (542 aa).

Mn(2+) contacts are provided by D24 and S74. S74 serves as the catalytic Phosphoserine intermediate. Substrate-binding positions include H135, 165–166, R197, R203, 268–271, and K341; these read RD and RPDR. Residues D408, H412, D449, H450, and H467 each contribute to the Mn(2+) site.

Belongs to the BPG-independent phosphoglycerate mutase family. Monomer. The cofactor is Mn(2+).

It carries out the reaction (2R)-2-phosphoglycerate = (2R)-3-phosphoglycerate. The protein operates within carbohydrate degradation; glycolysis; pyruvate from D-glyceraldehyde 3-phosphate: step 3/5. Catalyzes the interconversion of 2-phosphoglycerate and 3-phosphoglycerate. This Prochlorococcus marinus (strain NATL1A) protein is 2,3-bisphosphoglycerate-independent phosphoglycerate mutase.